We begin with the raw amino-acid sequence, 496 residues long: Aspartyl/glutamyl-tRNA(Asn/Gln) amidotransferase subunit B (496 aa).

Belongs to the GatB/GatE family. GatB subfamily. In terms of assembly, heterotrimer of A, B and C subunits.

It catalyses the reaction L-glutamyl-tRNA(Gln) + L-glutamine + ATP + H2O = L-glutaminyl-tRNA(Gln) + L-glutamate + ADP + phosphate + H(+). The enzyme catalyses L-aspartyl-tRNA(Asn) + L-glutamine + ATP + H2O = L-asparaginyl-tRNA(Asn) + L-glutamate + ADP + phosphate + 2 H(+). Allows the formation of correctly charged Asn-tRNA(Asn) or Gln-tRNA(Gln) through the transamidation of misacylated Asp-tRNA(Asn) or Glu-tRNA(Gln) in organisms which lack either or both of asparaginyl-tRNA or glutaminyl-tRNA synthetases. The reaction takes place in the presence of glutamine and ATP through an activated phospho-Asp-tRNA(Asn) or phospho-Glu-tRNA(Gln). This is Aspartyl/glutamyl-tRNA(Asn/Gln) amidotransferase subunit B from Xanthobacter autotrophicus (strain ATCC BAA-1158 / Py2).